A 367-amino-acid polypeptide reads, in one-letter code: Alanine racemase (367 aa).

Lysine 40 (proton acceptor; specific for D-alanine) is an active-site residue. At lysine 40 the chain carries N6-(pyridoxal phosphate)lysine. Arginine 136 is a binding site for substrate. The active-site Proton acceptor; specific for L-alanine is the tyrosine 263. Residue methionine 310 coordinates substrate.

This sequence belongs to the alanine racemase family. Pyridoxal 5'-phosphate serves as cofactor.

It catalyses the reaction L-alanine = D-alanine. It participates in amino-acid biosynthesis; D-alanine biosynthesis; D-alanine from L-alanine: step 1/1. In terms of biological role, catalyzes the interconversion of L-alanine and D-alanine. May also act on other amino acids. The polypeptide is Alanine racemase (alr) (Streptococcus pneumoniae (strain Hungary19A-6)).